Here is a 142-residue protein sequence, read N- to C-terminus: Protein-export protein SecB (142 aa).

The protein belongs to the SecB family. In terms of assembly, homotetramer, a dimer of dimers. One homotetramer interacts with 1 SecA dimer.

Its subcellular location is the cytoplasm. One of the proteins required for the normal export of preproteins out of the cell cytoplasm. It is a molecular chaperone that binds to a subset of precursor proteins, maintaining them in a translocation-competent state. It also specifically binds to its receptor SecA. The sequence is that of Protein-export protein SecB from Buchnera aphidicola subsp. Acyrthosiphon pisum (strain 5A).